The chain runs to 602 residues: Pentatricopeptide repeat-containing protein At5g11310, mitochondrial (602 aa).

Residues 1–35 (MNSLFTAFRRNLLLNPNPHRNFFLHRLLSSSRRSS) constitute a mitochondrion transit peptide. 11 PPR repeats span residues 134 to 165 (SPSLFDSVVNSLCKAREFEIAWSLVFDRVRSD), 172 to 202 (SADTFIVLIRRYARAGMVQQAIRAFEFARSY), 211 to 241 (ELRLLEVLLDALCKEGHVREASMYLERIGGT), 249 to 283 (SVRIFNILLNGWFRSRKLKQAEKLWEEMKAMNVKP), 284 to 318 (TVVTYGTLIEGYCRMRRVQIAMEVLEEMKMAEMEI), 319 to 353 (NFMVFNPIIDGLGEAGRLSEALGMMERFFVCESGP), 354 to 388 (TIVTYNSLVKNFCKAGDLPGASKILKMMMTRGVDP), 389 to 423 (TTTTYNHFFKYFSKHNKTEEGMNLYFKLIEAGHSP), 424 to 458 (DRLTYHLILKMLCEDGKLSLAMQVNKEMKNRGIDP), 459 to 493 (DLLTTTMLIHLLCRLEMLEEAFEEFDNAVRRGIIP), and 494 to 528 (QYITFKMIDNGLRSKGMSDMAKRLSSLMSSLPHSK).

This sequence belongs to the PPR family. P subfamily.

It localises to the mitochondrion. In Arabidopsis thaliana (Mouse-ear cress), this protein is Pentatricopeptide repeat-containing protein At5g11310, mitochondrial.